The sequence spans 211 residues: FMN-dependent NADH:quinone oxidoreductase 2 (211 aa).

FMN-binding positions include S10 and 17 to 19; that span reads SRS.

The protein belongs to the azoreductase type 1 family. In terms of assembly, homodimer. The cofactor is FMN.

The enzyme catalyses 2 a quinone + NADH + H(+) = 2 a 1,4-benzosemiquinone + NAD(+). The catalysed reaction is N,N-dimethyl-1,4-phenylenediamine + anthranilate + 2 NAD(+) = 2-(4-dimethylaminophenyl)diazenylbenzoate + 2 NADH + 2 H(+). Functionally, quinone reductase that provides resistance to thiol-specific stress caused by electrophilic quinones. In terms of biological role, also exhibits azoreductase activity. Catalyzes the reductive cleavage of the azo bond in aromatic azo compounds to the corresponding amines. In Listeria innocua serovar 6a (strain ATCC BAA-680 / CLIP 11262), this protein is FMN-dependent NADH:quinone oxidoreductase 2.